Reading from the N-terminus, the 428-residue chain is Light-independent protochlorophyllide reductase subunit N (428 aa).

[4Fe-4S] cluster is bound by residues cysteine 29, cysteine 54, and cysteine 115.

Belongs to the BchN/ChlN family. As to quaternary structure, protochlorophyllide reductase is composed of three subunits; BchL, BchN and BchB. Forms a heterotetramer of two BchB and two BchN subunits. Requires [4Fe-4S] cluster as cofactor.

It catalyses the reaction chlorophyllide a + oxidized 2[4Fe-4S]-[ferredoxin] + 2 ADP + 2 phosphate = protochlorophyllide a + reduced 2[4Fe-4S]-[ferredoxin] + 2 ATP + 2 H2O. Its pathway is porphyrin-containing compound metabolism; bacteriochlorophyll biosynthesis (light-independent). Functionally, component of the dark-operative protochlorophyllide reductase (DPOR) that uses Mg-ATP and reduced ferredoxin to reduce ring D of protochlorophyllide (Pchlide) to form chlorophyllide a (Chlide). This reaction is light-independent. The NB-protein (BchN-BchB) is the catalytic component of the complex. The polypeptide is Light-independent protochlorophyllide reductase subunit N (Cereibacter sphaeroides (strain ATCC 17029 / ATH 2.4.9) (Rhodobacter sphaeroides)).